Consider the following 309-residue polypeptide: Large ribosomal subunit protein mL45 (309 aa).

It belongs to the mitochondrion-specific ribosomal protein mL45 family. As to quaternary structure, component of the mitochondrial ribosome large subunit (39S) which comprises a 16S rRNA and about 50 distinct proteins.

The protein localises to the mitochondrion. Component of the mitochondrial large ribosomal subunit (mt-LSU). Within the mitochondrial ribosomes, required to direct the nascent polypeptide toward the tunnel exit and position the exit at a distance from the membrane surface. The sequence is that of Large ribosomal subunit protein mL45 (mrpl45) from Xenopus laevis (African clawed frog).